Consider the following 185-residue polypeptide: Ribosome-recycling factor (185 aa).

It belongs to the RRF family.

It is found in the cytoplasm. Responsible for the release of ribosomes from messenger RNA at the termination of protein biosynthesis. May increase the efficiency of translation by recycling ribosomes from one round of translation to another. The protein is Ribosome-recycling factor of Sulfurovum sp. (strain NBC37-1).